A 316-amino-acid chain; its full sequence is Glutathione synthetase (316 aa).

The 188-residue stretch at 124 to 311 (NEKLAALLFP…IAGLLFDAIE (188 aa)) folds into the ATP-grasp domain. 151-208 (FVLAHGQAVLKPLDGMGGRSIFRSGTGDPNLNVILETLTDGGRKLTLAQRFIPDITAG) is an ATP binding site. Positions 282 and 284 each coordinate Mg(2+).

This sequence belongs to the prokaryotic GSH synthase family. Mg(2+) is required as a cofactor. The cofactor is Mn(2+).

The enzyme catalyses gamma-L-glutamyl-L-cysteine + glycine + ATP = glutathione + ADP + phosphate + H(+). The protein operates within sulfur metabolism; glutathione biosynthesis; glutathione from L-cysteine and L-glutamate: step 2/2. The polypeptide is Glutathione synthetase (Xanthomonas campestris pv. campestris (strain ATCC 33913 / DSM 3586 / NCPPB 528 / LMG 568 / P 25)).